Consider the following 93-residue polypeptide: Pyrimidine/purine nucleoside phosphorylase (93 aa).

It belongs to the nucleoside phosphorylase PpnP family.

It carries out the reaction a purine D-ribonucleoside + phosphate = a purine nucleobase + alpha-D-ribose 1-phosphate. It catalyses the reaction adenosine + phosphate = alpha-D-ribose 1-phosphate + adenine. The enzyme catalyses cytidine + phosphate = cytosine + alpha-D-ribose 1-phosphate. The catalysed reaction is guanosine + phosphate = alpha-D-ribose 1-phosphate + guanine. It carries out the reaction inosine + phosphate = alpha-D-ribose 1-phosphate + hypoxanthine. It catalyses the reaction thymidine + phosphate = 2-deoxy-alpha-D-ribose 1-phosphate + thymine. The enzyme catalyses uridine + phosphate = alpha-D-ribose 1-phosphate + uracil. The catalysed reaction is xanthosine + phosphate = alpha-D-ribose 1-phosphate + xanthine. In terms of biological role, catalyzes the phosphorolysis of diverse nucleosides, yielding D-ribose 1-phosphate and the respective free bases. Can use uridine, adenosine, guanosine, cytidine, thymidine, inosine and xanthosine as substrates. Also catalyzes the reverse reactions. This chain is Pyrimidine/purine nucleoside phosphorylase, found in Pseudomonas syringae pv. tomato (strain ATCC BAA-871 / DC3000).